We begin with the raw amino-acid sequence, 429 residues long: Cyclin-B2-2 (429 aa).

Residues 66-98 (SQRKQESCDKKKLDSLHPSISRSQEETKKLKPS) are disordered. Residues 68–80 (RKQESCDKKKLDS) are compositionally biased toward basic and acidic residues.

The protein belongs to the cyclin family. Cyclin AB subfamily. In terms of assembly, interacts with CDC20-1 and CDC20-2. Expressed in roots.

This Arabidopsis thaliana (Mouse-ear cress) protein is Cyclin-B2-2 (CYCB2-2).